We begin with the raw amino-acid sequence, 309 residues long: uncharacterized protein (309 aa).

2 disordered regions span residues 1 to 94 and 286 to 309; these read IGEV…RQQI and HTRN…PPRG. The span at 30-43 shows a compositional bias: pro residues; that stretch reads PAQPPSPAPTPSRT. Positions 58–67 are enriched in basic and acidic residues; the sequence is RSKTPDKRSA. A compositionally biased stretch (pro residues) spans 297 to 309; sequence KNTPPPLEDPPRG.

This is an uncharacterized protein from Homo sapiens (Human).